A 265-amino-acid chain; its full sequence is Urease accessory protein UreH (265 aa).

It belongs to the UreD family. UreH, UreF and UreG form a complex that acts as a GTP-hydrolysis-dependent molecular chaperone, activating the urease apoprotein by helping to assemble the nickel containing metallocenter of UreC. The UreE protein probably delivers the nickel.

The protein localises to the cytoplasm. Its function is as follows. Required for maturation of urease via the functional incorporation of the urease nickel metallocenter. This Helicobacter pylori (strain P12) protein is Urease accessory protein UreH.